Reading from the N-terminus, the 584-residue chain is Ras-specific guanine nucleotide-releasing factor RalGPS1 (584 aa).

Over residues 1–13 the composition is skewed to polar residues; that stretch reads MDLMNGQSSSVNI. 3 disordered regions span residues 1–29, 285–338, and 380–407; these read MDLMNGQSSSVNIAATASEKSSSSESLSD, IEPG…IPHG, and HVPSRGQAESSTLSSGISIGSSDGSELS. Positions 14–26 are enriched in low complexity; that stretch reads AATASEKSSSSES. Positions 50-288 constitute a Ras-GEF domain; the sequence is TPEEYAGQIT…YKLSLKIEPG (239 aa). A PXXP motif is present at residues 326–329; sequence PTPP. Over residues 388–404 the composition is skewed to low complexity; that stretch reads ESSTLSSGISIGSSDGS. A PH domain is found at 458–570; that stretch reads AVTIQGVLRR…WFKHLSAACQ (113 aa).

It localises to the cytoplasm. The protein resides in the cell membrane. In terms of biological role, guanine nucleotide exchange factor. May be involved in cytoskeletal organization. This chain is Ras-specific guanine nucleotide-releasing factor RalGPS1 (RALGPS1), found in Gallus gallus (Chicken).